A 314-amino-acid chain; its full sequence is Oxaloacetate tautomerase FAHD2B, mitochondrial (314 aa).

Residues 1–84 constitute a mitochondrion transit peptide; that stretch reads MLGSSGRRLL…ATLSVVRRAL (84 aa). Mg(2+) contacts are provided by E159, E161, and D190. K203 is subject to N6-acetyllysine; alternate. K203 bears the N6-succinyllysine; alternate mark. At K234 the chain carries N6-acetyllysine.

This sequence belongs to the FAH family. Requires Mg(2+) as cofactor. The cofactor is Mn(2+).

It is found in the mitochondrion. The catalysed reaction is oxaloacetate = enol-oxaloacetate. Functionally, tautomerase that converts enol-oxaloacetate, a strong inhibitor of succinate dehydrogenase, to the physiological keto form of oxaloacetate. It is thereby required to maximize aerobic respiration efficiency by preventing succinate dehydrogenase inhibition. The protein is Oxaloacetate tautomerase FAHD2B, mitochondrial of Bos taurus (Bovine).